Reading from the N-terminus, the 165-residue chain is MAKMSLSSYLLILTFSLFSQGILLSASKSIRNLEDDMVFNTFRLGKALQKEDTPQKSVVAPSLEQYKNDDSSFMNDEENKNSKNTGSKHNFLNHGLPLNLAIKPYLALKGSVAFPAENGVQNTESTQEKREIGDEENSAKFPIGRRDFDMLRCMLGRVYRPCWQV.

A signal peptide spans 1-21 (MAKMSLSSYLLILTFSLFSQG). The segment at 68–88 (NDDSSFMNDEENKNSKNTGSK) is disordered. The residue at position 143 (Ile-143) is an Isoleucine amide. A disulfide bond links Cys-153 and Cys-162.

It belongs to the melanin-concentrating hormone family. In terms of processing, pro-MCH is processed differentially in the brain and in peripheral organs producing two neuropeptides; NEI and MCH. A third peptide, NGE, may also be produced. Preferential processing in neurons by prohormone convertase 2 (PC2) generates NEI. MCH is generated in neurons of the lateral hypothalmic area by several prohormone convertases including PC1/3, PC2 and PC5/6.

Its subcellular location is the secreted. In terms of biological role, MCH may act as a neurotransmitter or neuromodulator in a broad array of neuronal functions directed toward the regulation of goal-directed behavior, such as food intake, and general arousal. The sequence is that of Pro-MCH (PMCH) from Canis lupus familiaris (Dog).